The chain runs to 173 residues: Adenine phosphoribosyltransferase (173 aa).

Belongs to the purine/pyrimidine phosphoribosyltransferase family. In terms of assembly, homodimer.

It is found in the cytoplasm. The enzyme catalyses AMP + diphosphate = 5-phospho-alpha-D-ribose 1-diphosphate + adenine. The protein operates within purine metabolism; AMP biosynthesis via salvage pathway; AMP from adenine: step 1/1. Its function is as follows. Catalyzes a salvage reaction resulting in the formation of AMP, that is energically less costly than de novo synthesis. In Listeria monocytogenes serovar 1/2a (strain ATCC BAA-679 / EGD-e), this protein is Adenine phosphoribosyltransferase.